Reading from the N-terminus, the 122-residue chain is Secreted RxLR effector protein RXLR-C251 (122 aa).

An N-terminal signal peptide occupies residues 1-24 (MRFFYKLALMTTVASLACSDTALA). Residues 48–51 (RSLR) carry the RxLR motif.

Belongs to the RxLR effector family.

It localises to the secreted. The protein localises to the host cytoplasm. The protein resides in the host nucleus. In terms of biological role, secreted effector that does not suppress pattern-triggered immunity (PTI) in plant host. This chain is Secreted RxLR effector protein RXLR-C251, found in Plasmopara halstedii (Downy mildew of sunflower).